The chain runs to 116 residues: UPF0482 protein ECA2253 (116 aa).

An N-terminal signal peptide occupies residues 1 to 31; it reads MNHYSFSSLIRALIPLSLVIVSAVWQPAALA.

The protein belongs to the UPF0482 family.

The polypeptide is UPF0482 protein ECA2253 (Pectobacterium atrosepticum (strain SCRI 1043 / ATCC BAA-672) (Erwinia carotovora subsp. atroseptica)).